The sequence spans 664 residues: Probable L-type lectin-domain containing receptor kinase V.3 (664 aa).

The N-terminal stretch at 1-26 (MSMSCKINWLMVLVIIALSNLESSLG) is a signal peptide. Residues 27–278 (RLVFEGSAGL…YPKAESQVKL (252 aa)) are Extracellular-facing. The segment at 28–250 (LVFEGSAGLM…AIHYMWMWYV (223 aa)) is legume-lectin like. 5 N-linked (GlcNAc...) asparagine glycosylation sites follow: Asn69, Asn116, Asn122, Asn174, and Asn197. A helical transmembrane segment spans residues 279 to 299 (IVLVTFLTLALFVALAASALI). The Cytoplasmic segment spans residues 300–664 (VFFYKRHKKL…LPSGRPRLFL (365 aa)). The Protein kinase domain occupies 335–617 (NGFKQLLGEG…GVSELPDNLL (283 aa)). ATP is bound by residues 341 to 349 (LGEGGFGPV) and Lys364. The active-site Proton acceptor is the Asp461.

This sequence in the C-terminal section; belongs to the protein kinase superfamily. Ser/Thr protein kinase family. The protein in the N-terminal section; belongs to the leguminous lectin family.

The protein resides in the cell membrane. It carries out the reaction L-seryl-[protein] + ATP = O-phospho-L-seryl-[protein] + ADP + H(+). It catalyses the reaction L-threonyl-[protein] + ATP = O-phospho-L-threonyl-[protein] + ADP + H(+). The polypeptide is Probable L-type lectin-domain containing receptor kinase V.3 (LECRK53) (Arabidopsis thaliana (Mouse-ear cress)).